The following is a 53-amino-acid chain: KKGVTQREDDRTFPCNSGRCACQPLDSYSYTCQSPSSSTANCKNNVCVSEADW.

A propeptide spanning residues 1-6 is cleaved from the precursor; that stretch reads KKGVTQ. 3 disulfides stabilise this stretch: cysteine 15–cysteine 32, cysteine 20–cysteine 42, and cysteine 22–cysteine 47.

In terms of tissue distribution, expressed by the venom duct.

It localises to the secreted. Probable neurotoxin with unknown target. Possibly targets ion channels. This chain is Conotoxin Cal9.2e, found in Californiconus californicus (California cone).